The following is a 363-amino-acid chain: Pyrimidine monooxygenase RutA (363 aa).

FMN contacts are provided by residues 49-50 (IK), Asn-115, Glu-124, 140-141 (RY), and Ser-190.

Belongs to the NtaA/SnaA/DszA monooxygenase family. RutA subfamily.

It catalyses the reaction uracil + FMNH2 + NADH + O2 = (Z)-3-ureidoacrylate + FMN + NAD(+) + H2O + H(+). The enzyme catalyses thymine + FMNH2 + NADH + O2 = (Z)-2-methylureidoacrylate + FMN + NAD(+) + H2O + H(+). In terms of biological role, catalyzes the pyrimidine ring opening between N-3 and C-4 by an unusual flavin hydroperoxide-catalyzed mechanism, adding oxygen atoms in the process to yield ureidoacrylate peracid, that immediately reacts with FMN forming ureidoacrylate and FMN-N(5)-oxide. The FMN-N(5)-oxide reacts spontaneously with NADH to produce FMN. Requires the flavin reductase RutF to regenerate FMN in vivo. The sequence is that of Pyrimidine monooxygenase RutA from Enterobacter cloacae subsp. cloacae (strain ATCC 13047 / DSM 30054 / NBRC 13535 / NCTC 10005 / WDCM 00083 / NCDC 279-56).